The following is a 319-amino-acid chain: ATP-dependent 6-phosphofructokinase (319 aa).

Glycine 11 is an ATP binding site. Position 21 to 25 (21 to 25) interacts with ADP; that stretch reads RAVVR. Residues 72–73 and 102–105 each bind ATP; these read RC and GDGS. Aspartate 103 contacts Mg(2+). 125–127 provides a ligand contact to substrate; sequence TID. The active-site Proton acceptor is the aspartate 127. Position 154 (arginine 154) interacts with ADP. Substrate is bound by residues arginine 162 and 169–171; that span reads MGR. Residues 185–187, arginine 211, and 213–215 each bind ADP; these read GAE and KKH. Substrate is bound by residues glutamate 222, arginine 243, and 249–252; that span reads HVQR.

This sequence belongs to the phosphofructokinase type A (PFKA) family. ATP-dependent PFK group I subfamily. Prokaryotic clade 'B1' sub-subfamily. Homotetramer. It depends on Mg(2+) as a cofactor.

The protein localises to the cytoplasm. It catalyses the reaction beta-D-fructose 6-phosphate + ATP = beta-D-fructose 1,6-bisphosphate + ADP + H(+). Its pathway is carbohydrate degradation; glycolysis; D-glyceraldehyde 3-phosphate and glycerone phosphate from D-glucose: step 3/4. Allosterically activated by ADP and other diphosphonucleosides, and allosterically inhibited by phosphoenolpyruvate. In terms of biological role, catalyzes the phosphorylation of D-fructose 6-phosphate to fructose 1,6-bisphosphate by ATP, the first committing step of glycolysis. The protein is ATP-dependent 6-phosphofructokinase of Geobacillus sp. (strain WCH70).